The sequence spans 632 residues: 2-hydroxyacyl-CoA lyase 2 (632 aa).

Residues 13–33 form a helical membrane-spanning segment; that stretch reads LFPSFLLLACGTLVAALLGAA. Glu-98 contributes to the thiamine diphosphate binding site. A thiamine pyrophosphate binding region spans residues 470 to 550; that stretch reads DFVGTAAHLV…VMALVGNDAG (81 aa). 2 residues coordinate Mg(2+): Asp-521 and Asn-547.

It belongs to the TPP enzyme family. The cofactor is Mg(2+). It depends on thiamine diphosphate as a cofactor. As to expression, expressed in all tissues tested, with highest expression in heart, pancreas and placenta.

It is found in the endoplasmic reticulum membrane. The enzyme catalyses 2-hydroxyoctadecanoyl-CoA = heptadecanal + formyl-CoA. It catalyses the reaction (2R)-hydroxyhexadecanoyl-CoA = pentadecanal + formyl-CoA. Its function is as follows. Endoplasmic reticulum 2-OH acyl-CoA lyase involved in the cleavage (C1 removal) reaction in the fatty acid alpha-oxydation in a thiamine pyrophosphate (TPP)-dependent manner. Involved in the phytosphingosine degradation pathway. This chain is 2-hydroxyacyl-CoA lyase 2, found in Homo sapiens (Human).